The sequence spans 236 residues: 5'-methylthioadenosine/S-adenosylhomocysteine nucleosidase (236 aa).

The active-site Proton acceptor is Glu12. Substrate contacts are provided by residues Gly78, Ile153, and 174–175; that span reads ME. Catalysis depends on Asp198, which acts as the Proton donor.

Belongs to the PNP/UDP phosphorylase family. MtnN subfamily.

The enzyme catalyses S-adenosyl-L-homocysteine + H2O = S-(5-deoxy-D-ribos-5-yl)-L-homocysteine + adenine. It catalyses the reaction S-methyl-5'-thioadenosine + H2O = 5-(methylsulfanyl)-D-ribose + adenine. It carries out the reaction 5'-deoxyadenosine + H2O = 5-deoxy-D-ribose + adenine. Its pathway is amino-acid biosynthesis; L-methionine biosynthesis via salvage pathway; S-methyl-5-thio-alpha-D-ribose 1-phosphate from S-methyl-5'-thioadenosine (hydrolase route): step 1/2. Its function is as follows. Catalyzes the irreversible cleavage of the glycosidic bond in both 5'-methylthioadenosine (MTA) and S-adenosylhomocysteine (SAH/AdoHcy) to adenine and the corresponding thioribose, 5'-methylthioribose and S-ribosylhomocysteine, respectively. Also cleaves 5'-deoxyadenosine, a toxic by-product of radical S-adenosylmethionine (SAM) enzymes, into 5-deoxyribose and adenine. The sequence is that of 5'-methylthioadenosine/S-adenosylhomocysteine nucleosidase from Shewanella sp. (strain MR-7).